A 169-amino-acid polypeptide reads, in one-letter code: Ribosome maturation factor RimM (169 aa).

The region spanning 95 to 168 is the PRC barrel domain; that stretch reads PPDTAYIHDL…EMTIRRFDEF (74 aa).

This sequence belongs to the RimM family. As to quaternary structure, binds ribosomal protein uS19.

The protein localises to the cytoplasm. Functionally, an accessory protein needed during the final step in the assembly of 30S ribosomal subunit, possibly for assembly of the head region. Essential for efficient processing of 16S rRNA. May be needed both before and after RbfA during the maturation of 16S rRNA. It has affinity for free ribosomal 30S subunits but not for 70S ribosomes. The chain is Ribosome maturation factor RimM from Prosthecochloris aestuarii (strain DSM 271 / SK 413).